The following is a 584-amino-acid chain: Putative poly(A) polymerase catalytic subunit (584 aa).

Residues 522–531 (EAEISEKEET) are compositionally biased toward basic and acidic residues. The disordered stretch occupies residues 522–584 (EAEISEKEET…ENSLDSLTSD (63 aa)). Residues 546–569 (SPNSSPNSSPNNSLNNSIDISTNN) are compositionally biased toward low complexity.

This sequence belongs to the poxviridae poly(A) polymerase catalytic subunit family. Highly divergent.

The protein localises to the virion. The enzyme catalyses RNA(n) + ATP = RNA(n)-3'-adenine ribonucleotide + diphosphate. Polymerase that creates the 3'-poly(A) tail of mRNA's. In Acanthamoeba polyphaga (Amoeba), this protein is Putative poly(A) polymerase catalytic subunit.